A 127-amino-acid polypeptide reads, in one-letter code: Large ribosomal subunit protein bL17 (127 aa).

The protein belongs to the bacterial ribosomal protein bL17 family. As to quaternary structure, part of the 50S ribosomal subunit. Contacts protein L32.

This chain is Large ribosomal subunit protein bL17, found in Photobacterium profundum (strain SS9).